The chain runs to 248 residues: Sugar fermentation stimulation protein homolog (248 aa).

This sequence belongs to the SfsA family.

The protein is Sugar fermentation stimulation protein homolog of Prochlorococcus marinus subsp. pastoris (strain CCMP1986 / NIES-2087 / MED4).